A 260-amino-acid polypeptide reads, in one-letter code: 3'-5' ssDNA/RNA exonuclease TatD (260 aa).

The a divalent metal cation site is built by E91, H127, and H152.

This sequence belongs to the metallo-dependent hydrolases superfamily. TatD-type hydrolase family. TatD subfamily. Monomer. It depends on Mg(2+) as a cofactor.

Its subcellular location is the cytoplasm. 3'-5' exonuclease that prefers single-stranded DNA and RNA. May play a role in the H(2)O(2)-induced DNA damage repair. This Citrobacter koseri (strain ATCC BAA-895 / CDC 4225-83 / SGSC4696) protein is 3'-5' ssDNA/RNA exonuclease TatD.